We begin with the raw amino-acid sequence, 264 residues long: uncharacterized protein (264 aa).

An N-terminal signal peptide occupies residues 1 to 22 (MKSIKRIGLCISLLILIIFVTS). The N-palmitoyl cysteine moiety is linked to residue Cys-23. Cys-23 carries the S-diacylglycerol cysteine lipid modification.

Belongs to the staphylococcal tandem lipoprotein family.

It localises to the cell membrane. This is an uncharacterized protein from Staphylococcus aureus (strain MRSA252).